We begin with the raw amino-acid sequence, 268 residues long: MLRIAGRKLSSSAATRSSSAFFTRNPFTFTDDSSSPARSPSPASLASQFLDQFRGFSSNSVSPAHQTGLVSDLPATVAAIKNPSSKIVYDDSNHERYPPGDPSKRAFAYFVLTGGRFVYASLVRLLILKFVLSMSASKDVLALASLEVDLSSIEPGTTVTVKWRGKPVFIRRRTEEDINLANSVDLGSLRDPQQDAERVKNPEWLVVIGVCTHLGCIPLPNAGDFGGWFCPCHGSHYDISGRIRKGPAPYNLEVPTYSFMEENKLLIG.

A mitochondrion-targeting transit peptide spans 1 to 56 (MLRIAGRKLSSSAATRSSSAFFTRNPFTFTDDSSSPARSPSPASLASQFLDQFRGF). Over 57-105 (SSNSVSPAHQTGLVSDLPATVAAIKNPSSKIVYDDSNHERYPPGDPSKR) the chain is Mitochondrial matrix. Residues 106 to 128 (AFAYFVLTGGRFVYASLVRLLIL) traverse the membrane as a helical segment. The Mitochondrial intermembrane segment spans residues 129-268 (KFVLSMSASK…FMEENKLLIG (140 aa)). A Rieske domain is found at 178 to 266 (INLANSVDLG…YSFMEENKLL (89 aa)). 4 residues coordinate [2Fe-2S] cluster: Cys-211, His-213, Cys-230, and His-233. Cys-216 and Cys-232 are disulfide-bonded.

Belongs to the Rieske iron-sulfur protein family. Component of the ubiquinol-cytochrome c oxidoreductase (cytochrome b-c1 complex, complex III, CIII), a multisubunit enzyme composed of 3 respiratory subunits cytochrome b, cytochrome c1 and Rieske protein, 2 core protein subunits, and several low-molecular weight protein subunits. The complex exists as an obligatory dimer and forms supercomplexes (SCs) in the inner mitochondrial membrane with cytochrome c oxidase (complex IV, CIV). Requires [2Fe-2S] cluster as cofactor. As to expression, high levels are seen in the flowers while a low level expression is seen in the roots, leaves and stems.

It localises to the mitochondrion inner membrane. The enzyme catalyses a quinol + 2 Fe(III)-[cytochrome c](out) = a quinone + 2 Fe(II)-[cytochrome c](out) + 2 H(+)(out). Its function is as follows. Component of the ubiquinol-cytochrome c oxidoreductase, a multisubunit transmembrane complex that is part of the mitochondrial electron transport chain which drives oxidative phosphorylation. The respiratory chain contains 3 multisubunit complexes succinate dehydrogenase (complex II, CII), ubiquinol-cytochrome c oxidoreductase (cytochrome b-c1 complex, complex III, CIII) and cytochrome c oxidase (complex IV, CIV), that cooperate to transfer electrons derived from NADH and succinate to molecular oxygen, creating an electrochemical gradient over the inner membrane that drives transmembrane transport and the ATP synthase. The cytochrome b-c1 complex catalyzes electron transfer from ubiquinol to cytochrome c, linking this redox reaction to translocation of protons across the mitochondrial inner membrane, with protons being carried across the membrane as hydrogens on the quinol. In the process called Q cycle, 2 protons are consumed from the matrix, 4 protons are released into the intermembrane space and 2 electrons are passed to cytochrome c. The Rieske protein is a catalytic core subunit containing a [2Fe-2S] iron-sulfur cluster. It cycles between 2 conformational states during catalysis to transfer electrons from the quinol bound in the Q(0) site in cytochrome b to cytochrome c1. This chain is Cytochrome b-c1 complex subunit Rieske-3, mitochondrial, found in Nicotiana tabacum (Common tobacco).